The following is a 110-amino-acid chain: Single-stranded DNA-binding protein 1 (110 aa).

In terms of domain architecture, SSB spans 1 to 104 (MNKILLIGRM…VVGEEVQFLE (104 aa)).

As to quaternary structure, homotetramer.

This chain is Single-stranded DNA-binding protein 1 (ssb1), found in Clostridium acetobutylicum (strain ATCC 824 / DSM 792 / JCM 1419 / IAM 19013 / LMG 5710 / NBRC 13948 / NRRL B-527 / VKM B-1787 / 2291 / W).